Reading from the N-terminus, the 100-residue chain is NADH-quinone oxidoreductase subunit K (100 aa).

Transmembrane regions (helical) follow at residues 4–24, 28–48, and 60–80; these read LQHGLILSAILFVLGLTGLVI, LLFMLIGLEIMINASALAFVV, and VMYILAISLAAAEASIGLALL.

This sequence belongs to the complex I subunit 4L family. In terms of assembly, NDH-1 is composed of 13 different subunits. Subunits NuoA, H, J, K, L, M, N constitute the membrane sector of the complex.

The protein resides in the cell inner membrane. The catalysed reaction is a quinone + NADH + 5 H(+)(in) = a quinol + NAD(+) + 4 H(+)(out). Functionally, NDH-1 shuttles electrons from NADH, via FMN and iron-sulfur (Fe-S) centers, to quinones in the respiratory chain. The immediate electron acceptor for the enzyme in this species is believed to be ubiquinone. Couples the redox reaction to proton translocation (for every two electrons transferred, four hydrogen ions are translocated across the cytoplasmic membrane), and thus conserves the redox energy in a proton gradient. This Shigella boydii serotype 18 (strain CDC 3083-94 / BS512) protein is NADH-quinone oxidoreductase subunit K.